A 128-amino-acid polypeptide reads, in one-letter code: Aspartate 1-decarboxylase (128 aa).

Catalysis depends on S25, which acts as the Schiff-base intermediate with substrate; via pyruvic acid. Position 25 is a pyruvic acid (Ser) (S25). T57 provides a ligand contact to substrate. Y58 (proton donor) is an active-site residue. Substrate is bound at residue 73 to 75 (GAA).

The protein belongs to the PanD family. In terms of assembly, heterooctamer of four alpha and four beta subunits. Pyruvate is required as a cofactor. In terms of processing, is synthesized initially as an inactive proenzyme, which is activated by self-cleavage at a specific serine bond to produce a beta-subunit with a hydroxyl group at its C-terminus and an alpha-subunit with a pyruvoyl group at its N-terminus.

It localises to the cytoplasm. It catalyses the reaction L-aspartate + H(+) = beta-alanine + CO2. It participates in cofactor biosynthesis; (R)-pantothenate biosynthesis; beta-alanine from L-aspartate: step 1/1. Functionally, catalyzes the pyruvoyl-dependent decarboxylation of aspartate to produce beta-alanine. In Ruminiclostridium cellulolyticum (strain ATCC 35319 / DSM 5812 / JCM 6584 / H10) (Clostridium cellulolyticum), this protein is Aspartate 1-decarboxylase.